The chain runs to 237 residues: Small ribosomal subunit protein uS2 (237 aa).

Belongs to the universal ribosomal protein uS2 family.

The protein is Small ribosomal subunit protein uS2 of Clostridioides difficile (strain 630) (Peptoclostridium difficile).